The following is a 367-amino-acid chain: Aspartate-semialdehyde dehydrogenase (367 aa).

Residues Arg-10–Val-13, Thr-37–Ser-38, and Gln-73 contribute to the NADP(+) site. Arg-102 is a binding site for phosphate. Catalysis depends on Cys-135, which acts as the Acyl-thioester intermediate. Cys-135 is modified (S-cysteinyl cysteine; in inhibited form). Gln-162 contacts substrate. NADP(+) contacts are provided by residues Ser-165–Gly-166 and Pro-193. Substrate is bound at residue Glu-241. Lys-244 is a phosphate binding site. Arg-267 serves as a coordination point for substrate. His-274 (proton acceptor) is an active-site residue. Gln-350 is an NADP(+) binding site.

The protein belongs to the aspartate-semialdehyde dehydrogenase family. In terms of assembly, homodimer.

It catalyses the reaction L-aspartate 4-semialdehyde + phosphate + NADP(+) = 4-phospho-L-aspartate + NADPH + H(+). The protein operates within amino-acid biosynthesis; L-lysine biosynthesis via DAP pathway; (S)-tetrahydrodipicolinate from L-aspartate: step 2/4. It participates in amino-acid biosynthesis; L-methionine biosynthesis via de novo pathway; L-homoserine from L-aspartate: step 2/3. It functions in the pathway amino-acid biosynthesis; L-threonine biosynthesis; L-threonine from L-aspartate: step 2/5. In terms of biological role, catalyzes the NADPH-dependent formation of L-aspartate-semialdehyde (L-ASA) by the reductive dephosphorylation of L-aspartyl-4-phosphate. In Escherichia coli O6:H1 (strain CFT073 / ATCC 700928 / UPEC), this protein is Aspartate-semialdehyde dehydrogenase.